A 224-amino-acid polypeptide reads, in one-letter code: MGFVCLFGLVVMGAWGAWGGSQATEYVLRSVIAKEVGDILRVPCMRTPADDVSWRYEAPSVIDYARIDGIFLRYHCPGLDTFLWDRHAQRAYLVNPFLFAAGFLEDLSHSVFPADTQETTTRRALYKEIRDALGSRKQAVSHAPVRAGCVNFDYSRTRRCVGRRDLRPANTTSTWEPPVSSDDEASSQSKPLATQPPVLALSNAPPRRVSPTRGRRRHTRLRRN.

The signal sequence occupies residues 1–16 (MGFVCLFGLVVMGAWG). Positions 20–161 (GSQATEYVLR…FDYSRTRRCV (142 aa)) are interaction with gH. The gL alphaherpesvirus-type domain occupies 23–201 (ATEYVLRSVI…LATQPPVLAL (179 aa)). 2 disulfides stabilise this stretch: cysteine 44-cysteine 76 and cysteine 149-cysteine 160. The disordered stretch occupies residues 168 to 224 (PANTTSTWEPPVSSDDEASSQSKPLATQPPVLALSNAPPRRVSPTRGRRRHTRLRRN). Basic residues predominate over residues 213–224 (RGRRRHTRLRRN).

It belongs to the herpesviridae glycoprotein L (gL) family. Alphaherpesvirinae gL subfamily. In terms of assembly, interacts with glycoprotein H (gH); this interaction is necessary for the correct processing and cell surface expression of gH. The heterodimer gH/gL seems to interact with gB trimers during fusion.

It is found in the virion membrane. Its subcellular location is the host cell membrane. The protein localises to the host Golgi apparatus. It localises to the host trans-Golgi network. Its function is as follows. The heterodimer glycoprotein H-glycoprotein L is required for the fusion of viral and plasma membranes leading to virus entry into the host cell. Acts as a functional inhibitor of gH and maintains gH in an inhibited form. Upon binding to host integrins, gL dissociates from gH leading to activation of the viral fusion glycoproteins gB and gH. This Homo sapiens (Human) protein is Envelope glycoprotein L.